The chain runs to 238 residues: Survival of motor neuron-related-splicing factor 30 (238 aa).

One can recognise a Tudor domain in the interval 72 to 132 (SWKVGDKCMA…KPVEEGRKAK (61 aa)). The short motif at 142–160 (KKEMIAQQREYKKKKALKK) is the Nuclear localization signal element. A Phosphoserine modification is found at serine 201. Lysine 219 is subject to N6-acetyllysine.

The protein belongs to the SMN family. As to quaternary structure, associates with spliceosomes. Associates with U4/U5/U6 tri-snRNP and with U2 snRNP.

It localises to the nucleus speckle. The protein localises to the nucleus. Its subcellular location is the cajal body. In terms of biological role, involved in spliceosome assembly. This is Survival of motor neuron-related-splicing factor 30 (SMNDC1) from Bos taurus (Bovine).